The primary structure comprises 385 residues: 1-deoxy-D-xylulose 5-phosphate reductoisomerase (385 aa).

Residues T10, G11, S12, I13, K37, and N124 each coordinate NADPH. 1-deoxy-D-xylulose 5-phosphate is bound at residue K125. Residue E126 coordinates NADPH. D150 is a Mn(2+) binding site. Residues S151, E152, S176, and H199 each contribute to the 1-deoxy-D-xylulose 5-phosphate site. Position 152 (E152) interacts with Mn(2+). G205 serves as a coordination point for NADPH. S212, N217, K218, and E221 together coordinate 1-deoxy-D-xylulose 5-phosphate. E221 is a binding site for Mn(2+).

Belongs to the DXR family. The cofactor is Mg(2+). Mn(2+) is required as a cofactor.

The catalysed reaction is 2-C-methyl-D-erythritol 4-phosphate + NADP(+) = 1-deoxy-D-xylulose 5-phosphate + NADPH + H(+). It participates in isoprenoid biosynthesis; isopentenyl diphosphate biosynthesis via DXP pathway; isopentenyl diphosphate from 1-deoxy-D-xylulose 5-phosphate: step 1/6. Its function is as follows. Catalyzes the NADPH-dependent rearrangement and reduction of 1-deoxy-D-xylulose-5-phosphate (DXP) to 2-C-methyl-D-erythritol 4-phosphate (MEP). The polypeptide is 1-deoxy-D-xylulose 5-phosphate reductoisomerase (Clostridium botulinum (strain ATCC 19397 / Type A)).